Consider the following 335-residue polypeptide: Biotin synthase (335 aa).

One can recognise a Radical SAM core domain in the interval 47 to 276 (FYGKKVKLNM…SKEIRISGGR (230 aa)). The [4Fe-4S] cluster site is built by cysteine 65, cysteine 69, and cysteine 72. Cysteine 109, cysteine 141, cysteine 201, and arginine 271 together coordinate [2Fe-2S] cluster.

It belongs to the radical SAM superfamily. Biotin synthase family. As to quaternary structure, homodimer. Requires [4Fe-4S] cluster as cofactor. [2Fe-2S] cluster serves as cofactor.

It catalyses the reaction (4R,5S)-dethiobiotin + (sulfur carrier)-SH + 2 reduced [2Fe-2S]-[ferredoxin] + 2 S-adenosyl-L-methionine = (sulfur carrier)-H + biotin + 2 5'-deoxyadenosine + 2 L-methionine + 2 oxidized [2Fe-2S]-[ferredoxin]. The protein operates within cofactor biosynthesis; biotin biosynthesis; biotin from 7,8-diaminononanoate: step 2/2. Catalyzes the conversion of dethiobiotin (DTB) to biotin by the insertion of a sulfur atom into dethiobiotin via a radical-based mechanism. The chain is Biotin synthase from Bacillus subtilis (strain 168).